The following is a 177-amino-acid chain: Endoribonuclease YbeY (177 aa).

Zn(2+) contacts are provided by His-118, His-122, and His-128.

Belongs to the endoribonuclease YbeY family. It depends on Zn(2+) as a cofactor.

It localises to the cytoplasm. In terms of biological role, single strand-specific metallo-endoribonuclease involved in late-stage 70S ribosome quality control and in maturation of the 3' terminus of the 16S rRNA. This is Endoribonuclease YbeY from Mycolicibacterium paratuberculosis (strain ATCC BAA-968 / K-10) (Mycobacterium paratuberculosis).